Consider the following 611-residue polypeptide: Protein spaetzle 3 (611 aa).

An N-terminal signal peptide occupies residues 1–14 (MALTNFSLPFGALG). Asn-5 carries an N-linked (GlcNAc...) asparagine glycan. The tract at residues 57 to 322 (EYFKNNPYAP…NDKSNNNQMP (266 aa)) is disordered. Composition is skewed to low complexity over residues 104 to 120 (QQVQ…QHQQ), 127 to 153 (SVSF…LTQT), and 169 to 185 (PGQQ…QQKQ). The segment covering 191-210 (GSASATFTKNSGSFSITSFG) has biased composition (polar residues). Residues 218-239 (PPQPQQPPPSQQQQPPPAPPPQ) are compositionally biased toward pro residues. The span at 288–306 (YDVEEGEEDEEEDGEEEGQ) shows a compositional bias: acidic residues. Asn-335 and Asn-351 each carry an N-linked (GlcNAc...) asparagine glycan. Residues 477–518 (KKRQAAAGGSRNRGGSAGGSGNGNTNANRQPGNKNGSSGTGR) form a disordered region. Residues 487–498 (RNRGGSAGGSGN) show a composition bias toward gly residues. An N-linked (GlcNAc...) asparagine glycan is attached at Asn-511. The region spanning 521-609 (ACESKIEIVT…LFPSCCVCRC (89 aa)) is the Spaetzle domain. 3 disulfides stabilise this stretch: Cys-522–Cys-573, Cys-559–Cys-605, and Cys-567–Cys-607.

Homodimer; disulfide-linked.

In terms of biological role, neurotrophin which may function as a ligand to the Toll-related receptor Tollo. Involved in a Tollo and JNK signaling pathway that positively regulates neuromuscular junction (NMJ) growth in presynaptic motorneurons. May function by activating Tollo to promote the phosphorylation of JNK. The sequence is that of Protein spaetzle 3 from Drosophila melanogaster (Fruit fly).